The following is a 709-amino-acid chain: Ral guanine nucleotide dissociation stimulator-like 3 (709 aa).

A disordered region spans residues 26–55 (VYSVSLRRQRSQRSTPERSGEGQTPIPATD). One can recognise an N-terminal Ras-GEF domain in the interval 64-201 (KVRALRAARL…LLEDFLKEAK (138 aa)). Disordered regions lie at residues 203–225 (EQTEEEKRLAWSGPPRIAQTPGS), 395–416 (SQEETTEDDDCPSGSLPSKLPP), and 502–604 (PPAA…SRVP). The region spanning 248–503 (SVDDVAEQLT…YRVSRVIEPP (256 aa)) is the Ras-GEF domain. Composition is skewed to low complexity over residues 502–511 (PPAASCPSSP) and 533–551 (SSPGGSPGDPSSPTSSVSP). Phosphoserine is present on residues Ser-506 and Ser-510. A compositionally biased stretch (pro residues) spans 552–576 (GSPPSSPRNREPPPPGSPPASPGPQ). Phosphoserine is present on residues Ser-553, Ser-568, Ser-572, Ser-577, and Ser-600. An interaction with HRAS, MRAS and RIT1 region spans residues 611–706 (SEARVIRVSI…KEGTGHTLSA (96 aa)). Positions 612–699 (EARVIRVSIN…GDFLLRRKEG (88 aa)) constitute a Ras-associating domain.

In terms of assembly, interacts with GTP-bound forms of RIT1, HRAS and MRAS. Widely expressed. Expressed at high levels in the liver and kidney.

Guanine nucleotide exchange factor (GEF) for Ral-A. Potential effector of GTPase HRas and Ras-related protein M-Ras. Negatively regulates Elk-1-dependent gene induction downstream of HRas and MEKK1. The protein is Ral guanine nucleotide dissociation stimulator-like 3 (Rgl3) of Mus musculus (Mouse).